Here is an 806-residue protein sequence, read N- to C-terminus: Ribonucleoside-diphosphate reductase large subunit-like protein (806 aa).

It belongs to the ribonucleoside diphosphate reductase large chain family.

It is found in the virion. The protein localises to the host cytoplasm. Does not possess a ribonucleotide reductase activity. Betaherpesviruses probably use another strategy to expand the dNTP pool in a quiescent host cell. This chain is Ribonucleoside-diphosphate reductase large subunit-like protein, found in Human herpesvirus 7 (strain JI) (HHV-7).